Consider the following 341-residue polypeptide: Ketol-acid reductoisomerase (NADP(+)) (341 aa).

Positions 1-182 (MATIYYDKDA…GCTRAGVLET (182 aa)) constitute a KARI N-terminal Rossmann domain. Residues 25 to 28 (YGSQ), S51, S53, and 83 to 86 (DQTQ) each bind NADP(+). H108 is an active-site residue. G134 serves as a coordination point for NADP(+). One can recognise a KARI C-terminal knotted domain in the interval 183-328 (TFKEETETDL…KRLRDMMSWI (146 aa)). D191, E195, E227, and E231 together coordinate Mg(2+). S252 provides a ligand contact to substrate.

The protein belongs to the ketol-acid reductoisomerase family. Requires Mg(2+) as cofactor.

The enzyme catalyses (2R)-2,3-dihydroxy-3-methylbutanoate + NADP(+) = (2S)-2-acetolactate + NADPH + H(+). It carries out the reaction (2R,3R)-2,3-dihydroxy-3-methylpentanoate + NADP(+) = (S)-2-ethyl-2-hydroxy-3-oxobutanoate + NADPH + H(+). It functions in the pathway amino-acid biosynthesis; L-isoleucine biosynthesis; L-isoleucine from 2-oxobutanoate: step 2/4. Its pathway is amino-acid biosynthesis; L-valine biosynthesis; L-valine from pyruvate: step 2/4. Involved in the biosynthesis of branched-chain amino acids (BCAA). Catalyzes an alkyl-migration followed by a ketol-acid reduction of (S)-2-acetolactate (S2AL) to yield (R)-2,3-dihydroxy-isovalerate. In the isomerase reaction, S2AL is rearranged via a Mg-dependent methyl migration to produce 3-hydroxy-3-methyl-2-ketobutyrate (HMKB). In the reductase reaction, this 2-ketoacid undergoes a metal-dependent reduction by NADPH to yield (R)-2,3-dihydroxy-isovalerate. In Anaeromyxobacter dehalogenans (strain 2CP-C), this protein is Ketol-acid reductoisomerase (NADP(+)).